The sequence spans 100 residues: Small ribosomal subunit protein uS14c (100 aa).

Belongs to the universal ribosomal protein uS14 family. As to quaternary structure, part of the 30S ribosomal subunit.

It is found in the plastid. It localises to the chloroplast. Binds 16S rRNA, required for the assembly of 30S particles. The polypeptide is Small ribosomal subunit protein uS14c (Arabis hirsuta (Hairy rock-cress)).